The following is a 347-amino-acid chain: Merozoite surface protein 2 (347 aa).

A signal peptide spans 1–20 (MKVIKTLSIINFFIFVTFNI). Residues N22 and N36 are each glycosylated (N-linked (GlcNAc...) asparagine). The polymorphic region stretch occupies residues 44 to 273 (AESKPPTGDG…EQTESPELQS (230 aa)). 22 repeat units span residues 53–60 (GAVASAGN), 61–68 (GAVASAGN), 69–76 (GAVASAGN), 77–84 (GAVASAGN), 85–88 (GAGN), 89–92 (GAGN), 93–96 (GAGN), 97–100 (GAGN), 101–104 (GAGN), 105–108 (GAGN), 109–112 (GAGN), 113–116 (GAGN), 117–120 (GAGN), 121–124 (GAGN), 125–128 (GAGN), 129–132 (GAGN), 133–136 (GAGN), 137–140 (GAGN), 141–144 (GAGN), 145–152 (GAVASAGN), 153–156 (GAGN), and 157–164 (GAVASAGN). The tract at residues 53-164 (GAVASAGNGA…GNGAVASAGN (112 aa)) is 6 X 8 AA repeats of G-A-V-A-S-A-G-N. The tract at residues 85–156 (GAGNGAGNGA…VASAGNGAGN (72 aa)) is 16 X 4 AA repeats of G-A-G-N. Low complexity predominate over residues 165-206 (GAVAERSSSTPATTTTTTTTNDAEASTSTSSENSNHNNAETN). The segment at 165 to 308 (GAVAERSSST…DSQKECTDGN (144 aa)) is disordered. Composition is skewed to polar residues over residues 213-240 (VQPN…NVPR) and 247-275 (KSPT…QSAP). N224 carries N-linked (GlcNAc...) asparagine glycosylation. N296 is a glycosylation site (N-linked (GlcNAc...) asparagine). A disulfide bond links C304 and C312. N320 and N321 each carry an N-linked (GlcNAc...) asparagine glycan. A lipid anchor (GPI-anchor amidated asparagine) is attached at N321. Positions 322-347 (SSNIASINKFVVLISATLVLSFAIFI) are cleaved as a propeptide — removed in mature form.

It localises to the cell membrane. In terms of biological role, may play a role in the merozoite attachment to the erythrocyte. The polypeptide is Merozoite surface protein 2 (Plasmodium falciparum (isolate Nig32 / Nigeria)).